The following is a 555-amino-acid chain: Transmembrane protein 87B (555 aa).

The signal sequence occupies residues 1–42; that stretch reads MVAACRSVAGLLPRRRRCFPARAPLLRVALCLLCWTPAAVRA. The Lumenal segment spans residues 43–214; sequence VPELGLWLET…PHGYISASDW (172 aa). 2 N-linked (GlcNAc...) asparagine glycosylation sites follow: N68 and N197. The chain crosses the membrane as a helical span at residues 215 to 235; the sequence is PLMIFYMVMCIVYILYGILWL. Residues 236–247 lie on the Cytoplasmic side of the membrane; the sequence is TWSACYWKDILR. The chain crosses the membrane as a helical span at residues 248-268; it reads IQFWIAAVIFLGMLEKAVFYS. The Lumenal portion of the chain corresponds to 269-299; the sequence is EYQNISNTGLSTQGLLIFAELISAIKRTLAR. N-linked (GlcNAc...) asparagine glycosylation is present at N272. The helical transmembrane segment at 300-320 threads the bilayer; sequence LLVIIVSLGYGIVKPRLGTVM. Over 321–322 the chain is Cytoplasmic; sequence HR. A helical transmembrane segment spans residues 323–343; it reads VIGLGLLYLIFAAVEGVMRVI. At 344 to 350 the chain is on the lumenal side; the sequence is GGSNHLA. A helical membrane pass occupies residues 351–371; that stretch reads VVLDDIILAVIDSIFVWFIFI. The Cytoplasmic segment spans residues 372–396; sequence SLAQTMKTLRLRKNTVKFSLYRHFK. Residues 397 to 417 traverse the membrane as a helical segment; sequence NTLIFAVLASIVFMGWTTKTF. At 418–429 the chain is on the lumenal side; the sequence is RIAKCQSDWMER. A helical membrane pass occupies residues 430–450; it reads WVDDAFWSFLFSLILIVIMFL. Residues 451-555 lie on the Cytoplasmic side of the membrane; that stretch reads WRPSANNQRY…EKMFSSEKIM (105 aa). Phosphoserine occurs at positions 469, 494, 496, and 534.

Belongs to the LU7TM family. TMEM87 subfamily.

It is found in the golgi apparatus membrane. May be involved in retrograde transport from endosomes to the trans-Golgi network (TGN). The sequence is that of Transmembrane protein 87B from Homo sapiens (Human).